A 73-amino-acid polypeptide reads, in one-letter code: uncharacterized protein (73 aa).

Belongs to the asfivirus DP63R family.

This is an uncharacterized protein from Ornithodoros (relapsing fever ticks).